Here is a 319-residue protein sequence, read N- to C-terminus: uncharacterized protein (319 aa).

This is an uncharacterized protein from Ictalurid herpesvirus 1 (strain Auburn) (IcHV-1).